Consider the following 135-residue polypeptide: Fluoride-specific ion channel FluC (135 aa).

Transmembrane regions (helical) follow at residues 7 to 27 (IAAISLGASLGALARYGLGLA), 37 to 57 (IGTLAANLIAAYVVGVTIAYV), 70 to 90 (FMITGLAGGLSTFSTFTAELF), and 105 to 125 (LGLHVGGSLALLMLGMLTIGL). Residues Gly-77 and Ser-80 each coordinate Na(+).

It belongs to the fluoride channel Fluc/FEX (TC 1.A.43) family.

Its subcellular location is the cell inner membrane. The enzyme catalyses fluoride(in) = fluoride(out). Its activity is regulated as follows. Na(+) is not transported, but it plays an essential structural role and its presence is essential for fluoride channel function. Functionally, fluoride-specific ion channel. Important for reducing fluoride concentration in the cell, thus reducing its toxicity. The sequence is that of Fluoride-specific ion channel FluC from Xanthomonas oryzae pv. oryzae (strain MAFF 311018).